Here is a 511-residue protein sequence, read N- to C-terminus: Bifunctional purine biosynthesis protein PurH (511 aa).

The region spanning 1 to 147 (MIQIKRALIS…KNYKHTLVLT (147 aa)) is the MGS-like domain.

Belongs to the PurH family.

It carries out the reaction (6R)-10-formyltetrahydrofolate + 5-amino-1-(5-phospho-beta-D-ribosyl)imidazole-4-carboxamide = 5-formamido-1-(5-phospho-D-ribosyl)imidazole-4-carboxamide + (6S)-5,6,7,8-tetrahydrofolate. It catalyses the reaction IMP + H2O = 5-formamido-1-(5-phospho-D-ribosyl)imidazole-4-carboxamide. Its pathway is purine metabolism; IMP biosynthesis via de novo pathway; 5-formamido-1-(5-phospho-D-ribosyl)imidazole-4-carboxamide from 5-amino-1-(5-phospho-D-ribosyl)imidazole-4-carboxamide (10-formyl THF route): step 1/1. It functions in the pathway purine metabolism; IMP biosynthesis via de novo pathway; IMP from 5-formamido-1-(5-phospho-D-ribosyl)imidazole-4-carboxamide: step 1/1. In Leptospira borgpetersenii serovar Hardjo-bovis (strain JB197), this protein is Bifunctional purine biosynthesis protein PurH.